Reading from the N-terminus, the 419-residue chain is MDLLAELQWRGLVNQTTDEDGLRKLLNEERVTLYCGFDPTADSLHIGNLAAILTLRRFQQAGHRPIALVGGATGLIGDPSGKKSERTLNAKETVEAWSARIKEQLGRFLDFEADGNPAKIKNNYDWIGPLDVITFLRDVGKHFSVNYMMAKESVQSRIETGISFTEFSYMMLQAYDFLRLYETEGCRLQIGGSDQWGNITAGLELIRKTKGEARAFGLTIPLVTKADGTKFGKTESGTIWLDKEKTSPYEFYQFWINTDDRDVIRYLKYFTFLSKEEIEALEQELREAPEKRAAQKALAEEVTKLVHGEEALRQAIRISEALFSGDIANLTAAEIEQGFKDVPSFVHEGGDVPLVELLVSAGISPSKRQAREDIQNGAIYVNGERLQDVGAILTAEHRLEGRFTVIRRGKKKYYLIRYA.

Y34 lines the L-tyrosine pocket. Residues 39–48 (PTADSLHIGN) carry the 'HIGH' region motif. L-tyrosine-binding residues include Y169 and Q173. Residues 230–234 (KFGKT) carry the 'KMSKS' region motif. An ATP-binding site is contributed by K233. An S4 RNA-binding domain is found at 352–419 (VPLVELLVSA…KKKYYLIRYA (68 aa)).

It belongs to the class-I aminoacyl-tRNA synthetase family. TyrS type 1 subfamily. In terms of assembly, homodimer.

The protein resides in the cytoplasm. It catalyses the reaction tRNA(Tyr) + L-tyrosine + ATP = L-tyrosyl-tRNA(Tyr) + AMP + diphosphate + H(+). Functionally, catalyzes the attachment of tyrosine to tRNA(Tyr) in a two-step reaction: tyrosine is first activated by ATP to form Tyr-AMP and then transferred to the acceptor end of tRNA(Tyr). The chain is Tyrosine--tRNA ligase from Bacillus caldotenax.